A 311-amino-acid polypeptide reads, in one-letter code: Malate dehydrogenase (311 aa).

NAD(+) contacts are provided by residues 7–13 and Asp-34; that span reads GAAGGIG. 2 residues coordinate substrate: Arg-81 and Arg-87. NAD(+) contacts are provided by residues Asn-94 and 117–119; that span reads ITN. Substrate contacts are provided by Asn-119 and Arg-153. The Proton acceptor role is filled by His-177. NAD(+) is bound at residue Met-227.

Belongs to the LDH/MDH superfamily. MDH type 1 family. Homodimer.

It catalyses the reaction (S)-malate + NAD(+) = oxaloacetate + NADH + H(+). In terms of biological role, catalyzes the reversible oxidation of malate to oxaloacetate. The chain is Malate dehydrogenase from Pseudoalteromonas atlantica (strain T6c / ATCC BAA-1087).